Reading from the N-terminus, the 309-residue chain is Aspartate carbamoyltransferase catalytic subunit (309 aa).

Positions 57 and 58 each coordinate carbamoyl phosphate. K86 lines the L-aspartate pocket. Carbamoyl phosphate contacts are provided by R107, H135, and Q138. Residues R168 and R228 each contribute to the L-aspartate site. Residues L267 and P268 each contribute to the carbamoyl phosphate site.

This sequence belongs to the aspartate/ornithine carbamoyltransferase superfamily. ATCase family. As to quaternary structure, heterooligomer of catalytic and regulatory chains.

It carries out the reaction carbamoyl phosphate + L-aspartate = N-carbamoyl-L-aspartate + phosphate + H(+). The protein operates within pyrimidine metabolism; UMP biosynthesis via de novo pathway; (S)-dihydroorotate from bicarbonate: step 2/3. In terms of biological role, catalyzes the condensation of carbamoyl phosphate and aspartate to form carbamoyl aspartate and inorganic phosphate, the committed step in the de novo pyrimidine nucleotide biosynthesis pathway. This is Aspartate carbamoyltransferase catalytic subunit from Nitrosopumilus maritimus (strain SCM1).